We begin with the raw amino-acid sequence, 303 residues long: Protoheme IX farnesyltransferase (303 aa).

9 consecutive transmembrane segments (helical) span residues 26–46 (VVAL…PGMV), 48–68 (IDIL…AAAV), 98–118 (AILF…VWVN), 120–140 (LTAW…TFWL), 148–168 (IVIG…AVTG), 174–194 (ALLL…ALAV), 221–241 (ILLY…THML), 244–264 (LYLL…VAMM), and 278–298 (YSIV…YLLP).

This sequence belongs to the UbiA prenyltransferase family. Protoheme IX farnesyltransferase subfamily.

Its subcellular location is the cell inner membrane. The catalysed reaction is heme b + (2E,6E)-farnesyl diphosphate + H2O = Fe(II)-heme o + diphosphate. It functions in the pathway porphyrin-containing compound metabolism; heme O biosynthesis; heme O from protoheme: step 1/1. Its function is as follows. Converts heme B (protoheme IX) to heme O by substitution of the vinyl group on carbon 2 of heme B porphyrin ring with a hydroxyethyl farnesyl side group. This chain is Protoheme IX farnesyltransferase, found in Saccharophagus degradans (strain 2-40 / ATCC 43961 / DSM 17024).